The primary structure comprises 290 residues: MAKPTPAPRATPFLLAAVLSIVVVAASGAEARWYGGGGGGGYSPSPSPVSSIVSEQLYASLFLHKDDAACPARGFYTYASFVRAATRFPRFAATGCADARKREVAAFLAQISHETTGGWATAPDGPYAWGLCYKEEINPQSSYCDATDKQWPCYPGKSYHGRGPIQISWNFNYGPAGQALGFDGLRNPEIVANCSDIAFQTALWFWMTPRDTKPSCHQVMVGEYRPGPADVAANRTAGFGLVTNIVNGGLECNRAGDARVNNRIGFYRRYCQVLGVDVGPNLDCEHQQPF.

Residues 1–28 (MAKPTPAPRATPFLLAAVLSIVVVAASG) form the signal peptide. Intrachain disulfides connect C70–C132 and C144–C153. The active-site Proton donor is E114. 2 N-linked (GlcNAc...) asparagine glycosylation sites follow: N193 and N234. Residues C252 and C284 are joined by a disulfide bond.

The protein belongs to the glycosyl hydrolase 19 family. Chitinase class I subfamily. In terms of tissue distribution, expressed at low levels in roots, leaves and meristems.

The catalysed reaction is Random endo-hydrolysis of N-acetyl-beta-D-glucosaminide (1-&gt;4)-beta-linkages in chitin and chitodextrins.. The polypeptide is Chitinase 10 (Cht10) (Oryza sativa subsp. japonica (Rice)).